The primary structure comprises 644 residues: Exoribonuclease 2 (644 aa).

Positions 189–516 (REDLTALDFV…NHRLLKAVIK (328 aa)) constitute an RNB domain. The 83-residue stretch at 561-643 (DTRFAAEIVD…ETRSIIARPV (83 aa)) folds into the S1 motif domain.

Belongs to the RNR ribonuclease family. RNase II subfamily.

The protein localises to the cytoplasm. The enzyme catalyses Exonucleolytic cleavage in the 3'- to 5'-direction to yield nucleoside 5'-phosphates.. In terms of biological role, involved in mRNA degradation. Hydrolyzes single-stranded polyribonucleotides processively in the 3' to 5' direction. The chain is Exoribonuclease 2 from Escherichia coli O17:K52:H18 (strain UMN026 / ExPEC).